Here is a 205-residue protein sequence, read N- to C-terminus: Ribosomal RNA small subunit methyltransferase G (205 aa).

S-adenosyl-L-methionine contacts are provided by residues G76, L81, 127–128, and R140; that span reads IE.

Belongs to the methyltransferase superfamily. RNA methyltransferase RsmG family.

Its subcellular location is the cytoplasm. The catalysed reaction is guanosine(527) in 16S rRNA + S-adenosyl-L-methionine = N(7)-methylguanosine(527) in 16S rRNA + S-adenosyl-L-homocysteine. In terms of biological role, specifically methylates the N7 position of guanine in position 527 of 16S rRNA. This chain is Ribosomal RNA small subunit methyltransferase G, found in Francisella tularensis subsp. holarctica (strain FTNF002-00 / FTA).